The sequence spans 112 residues: K(+)/H(+) antiporter modulator KhtS (112 aa).

The segment at 42-64 (YVPMSSYPQETQSAKTPSPGSMH) is disordered. A compositionally biased stretch (polar residues) spans 47–60 (SYPQETQSAKTPSP).

The protein localises to the cell membrane. Functionally, modulates the activity of the potassium/proton antiporter KhtU. Involved in protection of the cell from methylglyoxal, a toxic by-product of glycolysis. The sequence is that of K(+)/H(+) antiporter modulator KhtS from Bacillus subtilis (strain 168).